A 131-amino-acid polypeptide reads, in one-letter code: Small ribosomal subunit protein bS6 (131 aa).

A disordered region spans residues 96–131; it reads VTAPSPMMKEEKSKSLLAKDEAAAPAPAPATEQATA. The span at 103-117 shows a compositional bias: basic and acidic residues; that stretch reads MKEEKSKSLLAKDEA. Low complexity predominate over residues 118–131; the sequence is AAPAPAPATEQATA.

It belongs to the bacterial ribosomal protein bS6 family.

Binds together with bS18 to 16S ribosomal RNA. The chain is Small ribosomal subunit protein bS6 from Methylobacillus flagellatus (strain ATCC 51484 / DSM 6875 / VKM B-1610 / KT).